The primary structure comprises 70 residues: Alpha-elapitoxin-Ast2a (70 aa).

5 disulfide bridges follow: C3–C20, C13–C41, C26–C30, C45–C56, and C57–C62. S70 is subject to Serine amide.

It belongs to the three-finger toxin family. Long-chain subfamily. Type II alpha-neurotoxin sub-subfamily. In terms of tissue distribution, expressed by the venom gland.

The protein localises to the secreted. Its function is as follows. Binds with high affinity to muscular (alpha-1/CHRNA1) and neuronal (alpha-7/CHRNA7) nicotinic acetylcholine receptor (nAChR) and inhibits acetylcholine from binding to the receptor, thereby impairing neuromuscular and neuronal transmission. The sequence is that of Alpha-elapitoxin-Ast2a from Hydrophis stokesii (Stokes's sea snake).